The following is a 359-amino-acid chain: C-X-C chemokine receptor type 2 (359 aa).

The Extracellular portion of the chain corresponds to 1 to 47; that stretch reads MGEFKVDKFNIEDFFSGDLDIFNYSSGMPSILPDAVPCHSENLEINS. N-linked (GlcNAc...) asparagine glycosylation is present at Asn-23. A helical transmembrane segment spans residues 48 to 74; the sequence is YAVVVIYVLVTLLSLVGNSLVMLVILY. Over 75-83 the chain is Cytoplasmic; the sequence is NRSTCSVTD. A helical membrane pass occupies residues 84–104; the sequence is VYLLNLAIADLFFALTLPVWA. Residues 105 to 119 are Extracellular-facing; sequence ASKVNGWTFGSTLCK. A disulfide bond links Cys-118 and Cys-195. A helical membrane pass occupies residues 120–141; the sequence is IFSYVKEVTFYSSVLLLACISM. At 142–162 the chain is on the cytoplasmic side; that stretch reads DRYLAIVHATSTLIQKRHLVK. A helical membrane pass occupies residues 163–182; that stretch reads FVCIAMWLLSVILALPILIL. Over 183-207 the chain is Extracellular; the sequence is RNPVKVNLSTLVCYEDVGNNTSRLR. A helical transmembrane segment spans residues 208-230; the sequence is VVLRILPQTFGFLVPLLIMLFCY. The Cytoplasmic portion of the chain corresponds to 231-250; that stretch reads GFTLRTLFKAHMGQKHRAMR. A helical membrane pass occupies residues 251–272; it reads VIFAVVLVFLLCWLPYNLVLFT. Topologically, residues 273–293 are extracellular; it reads DTLMRTKLIKETCERRDDIDK. Residues 294 to 314 traverse the membrane as a helical segment; it reads ALNATEILGFLHSCLNPIIYA. Topologically, residues 315–359 are cytoplasmic; it reads FIGQKFRHGLLKIMATYGLVSKEFLAKEGRPSFVSSSSANTSTTL.

The protein belongs to the G-protein coupled receptor 1 family. In terms of assembly, interacts with IL8. Interacts with GNAI2. In terms of processing, phosphorylated upon ligand binding; which is required for desensitization.

The protein resides in the cell membrane. Its function is as follows. Receptor for interleukin-8 which is a powerful neutrophil chemotactic factor. Binding of IL-8 to the receptor causes activation of neutrophils. This response is mediated via a G-protein that activates a phosphatidylinositol-calcium second messenger system. Binds to IL-8 with high affinity. Also binds with high affinity to CXCL3, GRO/MGSA and NAP-2. This Mus musculus (Mouse) protein is C-X-C chemokine receptor type 2 (Cxcr2).